Reading from the N-terminus, the 147-residue chain is Response regulator Rcp1 (147 aa).

Residues valine 10 to glutamate 135 form the Response regulatory domain. A 4-aspartylphosphate modification is found at aspartate 68.

Phosphorylated by Cph1.

In terms of biological role, forms a two-component system with Cph1 in which it acts as receiver substrate. In Synechocystis sp. (strain ATCC 27184 / PCC 6803 / Kazusa), this protein is Response regulator Rcp1 (rcp1).